Consider the following 149-residue polypeptide: Macrodomain Ter protein (149 aa).

Belongs to the MatP family. Homodimer.

The protein localises to the cytoplasm. Functionally, required for spatial organization of the terminus region of the chromosome (Ter macrodomain) during the cell cycle. Prevents early segregation of duplicated Ter macrodomains during cell division. Binds specifically to matS, which is a 13 bp signature motif repeated within the Ter macrodomain. The chain is Macrodomain Ter protein from Vibrio vulnificus (strain CMCP6).